The following is a 505-amino-acid chain: MCGIVGIAGVMPVNQSIYDALTVLQHRGQDAAGIITIDANNCFRLRKANGLVSDVFEARHMQRLQGNMGIGHVRYPTAGSSSASEAQPFYVNSPYGITLAHNGNLTNAHELRKKLFEEKRRHINTTSDSEILLNIFASELDNFRHYPLEADNIFAAIAATNRLIRGAYACVAMIIGHGMVAFRDPNGIRPLVLGKRDIDENRTEYMVASESVALDTLGFDFLRDVAPGEAIYITEEGQLFTRQCADNPVSNPCLFEYVYFARPDSFIDKISVYSARVNMGTKLGEKIAREWEDLDIDVVIPIPETSCDIALEIARILGKPYRQGFVKNRYVGRTFIMPGQQLRRKSVRRKLNANRAEFRDKNVLLVDDSIVRGTTSEQIIEMAREAGAKKVYLASAAPEIRFPNVYGIDMPSATELIAHGREVDEIRQIIGADGLIFQDLNDLIDAVRAENPDIQQFECSVFNGVYVTKDVDQGYLDFLDTLRNDDAKAVQRQNEVENLEMHNEG.

Cysteine 2 acts as the Nucleophile in catalysis. The 235-residue stretch at 2–236 (CGIVGIAGVM…PGEAIYITEE (235 aa)) folds into the Glutamine amidotransferase type-2 domain. Mg(2+)-binding residues include threonine 305, aspartate 367, and aspartate 368.

In the C-terminal section; belongs to the purine/pyrimidine phosphoribosyltransferase family. As to quaternary structure, homotetramer. Mg(2+) serves as cofactor.

The catalysed reaction is 5-phospho-beta-D-ribosylamine + L-glutamate + diphosphate = 5-phospho-alpha-D-ribose 1-diphosphate + L-glutamine + H2O. It functions in the pathway purine metabolism; IMP biosynthesis via de novo pathway; N(1)-(5-phospho-D-ribosyl)glycinamide from 5-phospho-alpha-D-ribose 1-diphosphate: step 1/2. Its activity is regulated as follows. Inhibited by iodoacetamide and by the glutamine analogs chloroketone and DON. Functionally, catalyzes the formation of phosphoribosylamine from phosphoribosylpyrophosphate (PRPP) and glutamine. Can also use NH(3) in place of glutamine. In Escherichia coli (strain K12), this protein is Amidophosphoribosyltransferase.